Consider the following 353-residue polypeptide: UDP-N-acetylglucosamine--N-acetylmuramyl-(pentapeptide) pyrophosphoryl-undecaprenol N-acetylglucosamine transferase (353 aa).

UDP-N-acetyl-alpha-D-glucosamine-binding positions include 10 to 12 (TGG), Asn124, Ser183, and Gln283.

Belongs to the glycosyltransferase 28 family. MurG subfamily.

The protein localises to the cell inner membrane. It carries out the reaction di-trans,octa-cis-undecaprenyl diphospho-N-acetyl-alpha-D-muramoyl-L-alanyl-D-glutamyl-meso-2,6-diaminopimeloyl-D-alanyl-D-alanine + UDP-N-acetyl-alpha-D-glucosamine = di-trans,octa-cis-undecaprenyl diphospho-[N-acetyl-alpha-D-glucosaminyl-(1-&gt;4)]-N-acetyl-alpha-D-muramoyl-L-alanyl-D-glutamyl-meso-2,6-diaminopimeloyl-D-alanyl-D-alanine + UDP + H(+). It participates in cell wall biogenesis; peptidoglycan biosynthesis. Cell wall formation. Catalyzes the transfer of a GlcNAc subunit on undecaprenyl-pyrophosphoryl-MurNAc-pentapeptide (lipid intermediate I) to form undecaprenyl-pyrophosphoryl-MurNAc-(pentapeptide)GlcNAc (lipid intermediate II). The chain is UDP-N-acetylglucosamine--N-acetylmuramyl-(pentapeptide) pyrophosphoryl-undecaprenol N-acetylglucosamine transferase from Helicobacter acinonychis (strain Sheeba).